A 210-amino-acid polypeptide reads, in one-letter code: Potassium-transporting ATPase KdpC subunit (210 aa).

Residues 13–33 (LVTLVLLLVCGLAYPLILTGI) traverse the membrane as a helical segment.

This sequence belongs to the KdpC family. As to quaternary structure, the system is composed of three essential subunits: KdpA, KdpB and KdpC.

The protein resides in the cell membrane. Its function is as follows. Part of the high-affinity ATP-driven potassium transport (or Kdp) system, which catalyzes the hydrolysis of ATP coupled with the electrogenic transport of potassium into the cytoplasm. This subunit acts as a catalytic chaperone that increases the ATP-binding affinity of the ATP-hydrolyzing subunit KdpB by the formation of a transient KdpB/KdpC/ATP ternary complex. The polypeptide is Potassium-transporting ATPase KdpC subunit (Clostridium kluyveri (strain ATCC 8527 / DSM 555 / NBRC 12016 / NCIMB 10680 / K1)).